The sequence spans 748 residues: Holliday junction recognition protein (748 aa).

Ser123, Ser140, Ser185, Ser201, and Ser211 each carry phosphoserine. A disordered region spans residues 191–226 (PGYCSRISRKSPGDPAKPASSPREWDPLHPSSTDMA). Lys354 is covalently cross-linked (Glycyl lysine isopeptide (Lys-Gly) (interchain with G-Cter in SUMO2)). Ser412, Ser448, and Ser473 each carry phosphoserine. Position 486 is a phosphoserine; by PKB/AKT1 (Ser486). Ser496 carries the post-translational modification Phosphoserine. Residues 512–574 (GRCLPKSDSS…PDKEVPGHGR (63 aa)) are disordered. A compositionally biased stretch (polar residues) spans 524-562 (LPKTNPTHSATRPQQTSDLHVQGNSSGIFRKSVSPSKTL). The segment covering 565-574 (PDKEVPGHGR) has biased composition (basic and acidic residues). Residues Lys581 and Lys586 each participate in a glycyl lysine isopeptide (Lys-Gly) (interchain with G-Cter in SUMO2) cross-link. Residues Ser595 and Ser642 each carry the phosphoserine modification. Positions 670-748 (RDGTRDHQFP…MLEKLETKSV (79 aa)) are disordered. Residues 688–699 (PQGSGRQGNSLG) show a composition bias toward polar residues. Over residues 721–748 (SEERGENTSYRMEEKSDFMLEKLETKSV) the composition is skewed to basic and acidic residues.

Interacts with CENPA (via CATD domain); the interaction is direct and specific for CENPA since it does not interact with H3.1- or H3.3-containing nucleosomes. Heterotrimer composed of HJURP, CENPA and histone H4, where HJURP interacts with the dimer formed by CENPA and histone H4 and prevents tetramerization of CENPA and H4. Identified in a centromere complex containing histones H2A, H2B and H4, and at least CENPA, CENPB, CENPC, CENPT, CENPN, HJURP, SUPT16H, SSRP1 and RSF1. Interacts with 14-3-3 family members in a phosphorylation-dependent manner. Interacts with MSH5 and NBN. In terms of tissue distribution, according to PubMed:17256767, highly expressed in the thymus with lower levels in the placenta, small intestine, liver, skeletal muscle, and colon. According to PubMed:17823411, highly expressed in testis, and at a relatively lower level in thymus and bone marrow. Significantly overexpressed in many lung cancer samples, compared with normal lung.

It localises to the nucleus. Its subcellular location is the nucleolus. The protein localises to the chromosome. The protein resides in the centromere. Functionally, centromeric protein that plays a central role in the incorporation and maintenance of histone H3-like variant CENPA at centromeres. Acts as a specific chaperone for CENPA and is required for the incorporation of newly synthesized CENPA molecules into nucleosomes at replicated centromeres. Prevents CENPA-H4 tetramerization and prevents premature DNA binding by the CENPA-H4 tetramer. Directly binds Holliday junctions. In Homo sapiens (Human), this protein is Holliday junction recognition protein (HJURP).